Reading from the N-terminus, the 442-residue chain is Mannosylglycerate hydrolase (442 aa).

Residues Y38, 42 to 45, Y90, Q116, and G176 each bind substrate; that span reads WSWD. D178 acts as the Proton donor in catalysis. Residues R213 and 369 to 370 contribute to the substrate site; that span reads YW. The active-site Proton acceptor is the E413.

It belongs to the glycosyl hydrolase 63 family. In terms of assembly, homodimer in solution.

It catalyses the reaction (2R)-2-O-(alpha-D-mannosyl)-glycerate + H2O = D-mannose + (R)-glycerate. It carries out the reaction (2R)-2-O-(alpha-D-glucopyranosyl)-glycerate + H2O = (R)-glycerate + D-glucose. With respect to regulation, activity is not stimulated by divalent cations and not affected in the presence of EDTA. In terms of biological role, hydrolase that catalyzes the hydrolysis of mannosylglycerate (MG), a solute produced in response to osmotic stress in thermophiles, into mannose and glycerate. Can also hydrolyze glucosylglycerate (GG) to glucose and glycerate, with similar catalytic efficiency. Is highly specific for MG and GG, and cannot use mannosylglyceramide (MGA), glucosylglycerol, mannosylglucosylglycerate (MGG), glucosylglucosylglycerate (GGG) or trehalose as substrates. In Rubrobacter radiotolerans (Arthrobacter radiotolerans), this protein is Mannosylglycerate hydrolase.